A 170-amino-acid polypeptide reads, in one-letter code: Crossover junction endodeoxyribonuclease RuvC (170 aa).

Catalysis depends on residues D9, E70, and D145. The Mg(2+) site is built by D9, E70, and D145.

It belongs to the RuvC family. In terms of assembly, homodimer which binds Holliday junction (HJ) DNA. The HJ becomes 2-fold symmetrical on binding to RuvC with unstacked arms; it has a different conformation from HJ DNA in complex with RuvA. In the full resolvosome a probable DNA-RuvA(4)-RuvB(12)-RuvC(2) complex forms which resolves the HJ. Mg(2+) serves as cofactor.

Its subcellular location is the cytoplasm. It carries out the reaction Endonucleolytic cleavage at a junction such as a reciprocal single-stranded crossover between two homologous DNA duplexes (Holliday junction).. In terms of biological role, the RuvA-RuvB-RuvC complex processes Holliday junction (HJ) DNA during genetic recombination and DNA repair. Endonuclease that resolves HJ intermediates. Cleaves cruciform DNA by making single-stranded nicks across the HJ at symmetrical positions within the homologous arms, yielding a 5'-phosphate and a 3'-hydroxyl group; requires a central core of homology in the junction. The consensus cleavage sequence is 5'-(A/T)TT(C/G)-3'. Cleavage occurs on the 3'-side of the TT dinucleotide at the point of strand exchange. HJ branch migration catalyzed by RuvA-RuvB allows RuvC to scan DNA until it finds its consensus sequence, where it cleaves and resolves the cruciform DNA. The polypeptide is Crossover junction endodeoxyribonuclease RuvC (Chlamydia muridarum (strain MoPn / Nigg)).